The following is a 322-amino-acid chain: Cell division control protein 10 (322 aa).

Position 1 is an N-acetylmethionine (Met-1). One can recognise a Septin-type G domain in the interval 29-302 (KGFQFNIMVV…EGFRARQLIA (274 aa)). Positions 39 to 46 (GQSGLGKS) are G1 motif. GTP is bound by residues 39-46 (GQSGLGKS), Thr-74, Gly-100, and 180-188 (KSDTLTLDE). Positions 97–100 (DTPG) are G3 motif. Residues 179–182 (GKSD) are G4 motif. Position 216 is a phosphothreonine (Thr-216). Residues Gly-236 and Arg-251 each coordinate GTP.

Belongs to the TRAFAC class TrmE-Era-EngA-EngB-Septin-like GTPase superfamily. Septin GTPase family. Component of the septin complex which consists of CDC3, CDC10, CDC11, CDC12 and probably SHS1 and rearranges to a cortical collar of highly ordered filaments at the mother-bud-neck. A complex formed by CDC3, CDC10, CDC11 and CDC12 is capable of forming long filaments in vitro and the components seem to be present in a 2:2:2:2 arrangement in vivo. The filaments are proposed to be formed by the end-to-end polymerization of CDC3-CDC12-CDC11 complexes with CDC10 serving as a bridge to bundle the polymers into paired filaments. Component of the GIN4 complex composed of at least BNI5, CDC3, CDC10, CDC11, CDC12, GIN4, NAP1 and SHS1. Self-associates. Interacts with SYP1.

It localises to the membrane. Its subcellular location is the bud neck. Its function is as follows. Septins are GTPases involved in cytokinesis that assemble early in the cell cycle as a patch at the incipient bud site and form a ring approximate 15 minutes before bud emergence, which transforms into an hour-glass shaped collar of cortical filaments that spans both sides of the mother-bud neck. This collar persists until just before cytokinesis, when it splits into two rings that occupy opposite sides of the neck. The septins at the bud neck serve as a structural scaffold that recruits different components involved in diverse processes at specific stages during the cell cycle. Many proteins bind asymmetrically to the septin collar. The septin assembly is regulated by protein kinases GIN4 and/or CLA4. May act by recruiting MYO1 and HOF1, a protein involved in septation, to the site of cleavage. Septins are also involved in cell morphogenesis, bud site selection, chitin deposition, cell cycle regulation, cell compartmentalization and spore wall formation. The protein is Cell division control protein 10 (CDC10) of Saccharomyces cerevisiae (strain ATCC 204508 / S288c) (Baker's yeast).